A 141-amino-acid chain; its full sequence is MAIERTLSIIKPDAVAKNVIGKIYDRFESAGLKIIASRMAHLSQNEAEQFYGVHKDRPFFKDLVSFMISGPVMIQVLQGEGAIAKNRDLMGATDPKKADKGTIRADFADSIDANAVHGSDAPETAAVEVAFFFPGMNVFNR.

Residues K11, F59, R87, T93, R104, and N114 each contribute to the ATP site. H117 acts as the Pros-phosphohistidine intermediate in catalysis.

This sequence belongs to the NDK family. Homotetramer. It depends on Mg(2+) as a cofactor.

The protein localises to the cytoplasm. The catalysed reaction is a 2'-deoxyribonucleoside 5'-diphosphate + ATP = a 2'-deoxyribonucleoside 5'-triphosphate + ADP. It carries out the reaction a ribonucleoside 5'-diphosphate + ATP = a ribonucleoside 5'-triphosphate + ADP. In terms of biological role, major role in the synthesis of nucleoside triphosphates other than ATP. The ATP gamma phosphate is transferred to the NDP beta phosphate via a ping-pong mechanism, using a phosphorylated active-site intermediate. The polypeptide is Nucleoside diphosphate kinase (Polynucleobacter asymbioticus (strain DSM 18221 / CIP 109841 / QLW-P1DMWA-1) (Polynucleobacter necessarius subsp. asymbioticus)).